The following is a 292-amino-acid chain: 4-diphosphocytidyl-2-C-methyl-D-erythritol kinase (292 aa).

Lysine 20 is an active-site residue. 103-113 (PMGGGIGGGSS) provides a ligand contact to ATP. Aspartate 145 is a catalytic residue.

The protein belongs to the GHMP kinase family. IspE subfamily.

The catalysed reaction is 4-CDP-2-C-methyl-D-erythritol + ATP = 4-CDP-2-C-methyl-D-erythritol 2-phosphate + ADP + H(+). It participates in isoprenoid biosynthesis; isopentenyl diphosphate biosynthesis via DXP pathway; isopentenyl diphosphate from 1-deoxy-D-xylulose 5-phosphate: step 3/6. Its function is as follows. Catalyzes the phosphorylation of the position 2 hydroxy group of 4-diphosphocytidyl-2C-methyl-D-erythritol. The protein is 4-diphosphocytidyl-2-C-methyl-D-erythritol kinase of Cupriavidus metallidurans (strain ATCC 43123 / DSM 2839 / NBRC 102507 / CH34) (Ralstonia metallidurans).